A 204-amino-acid chain; its full sequence is Recombination protein RecR (204 aa).

The C4-type zinc finger occupies 61 to 76; sequence CACCNTFSETQVCSTC. In terms of domain architecture, Toprim spans 84–183; sequence SLLCIVETPA…KVTRIARGIP (100 aa).

Belongs to the RecR family.

May play a role in DNA repair. It seems to be involved in an RecBC-independent recombinational process of DNA repair. It may act with RecF and RecO. The chain is Recombination protein RecR from Polynucleobacter necessarius subsp. necessarius (strain STIR1).